The primary structure comprises 323 residues: Protein MEI2-like 6 (323 aa).

This is Protein MEI2-like 6 (ML6) from Oryza sativa subsp. japonica (Rice).